A 156-amino-acid chain; its full sequence is AP-1 complex subunit sigma-1 (156 aa).

Belongs to the adaptor complexes small subunit family. As to quaternary structure, adapter protein complex 1 (AP-1) is a heterotetramer composed of two large adaptins (gamma-type subunit APL4 and beta-type subunit APL2), a medium adaptin (mu-type subunit APM1) and a small adaptin (sigma-type subunit APS1). AP-1 interacts with clathrin. Also a component of the AP-1R complex composed of at least APM2, APL4 and APS1.

The protein localises to the cytoplasm. The protein resides in the nucleus. Its subcellular location is the cytoplasmic vesicle. It is found in the clathrin-coated vesicle membrane. It localises to the endosome. The protein localises to the golgi apparatus. Its function is as follows. Component of the adapter complexes which link clathrin to receptors in coated vesicles. Clathrin-associated protein complexes are believed to interact with the cytoplasmic tails of membrane proteins, leading to their selection and concentration. AP19 is probably a subunit of the Golgi membrane adapter. Component of the AP-1-related (AP-1R) complex, an adapter protein complex that mediates sorting of cargo SNARE SNC1. In contrast to the APM1-containing AP-1 complex, AP-1R is incapable of sorting CHS3. The chain is AP-1 complex subunit sigma-1 (APS1) from Saccharomyces cerevisiae (strain ATCC 204508 / S288c) (Baker's yeast).